The following is a 114-amino-acid chain: UPF0342 protein PEPE_0673 (114 aa).

It belongs to the UPF0342 family.

The polypeptide is UPF0342 protein PEPE_0673 (Pediococcus pentosaceus (strain ATCC 25745 / CCUG 21536 / LMG 10740 / 183-1w)).